The primary structure comprises 245 residues: tRNA (guanine-N(1)-)-methyltransferase (245 aa).

S-adenosyl-L-methionine contacts are provided by residues Gly111 and 130-135 (IGDYVL).

This sequence belongs to the RNA methyltransferase TrmD family. As to quaternary structure, homodimer.

It localises to the cytoplasm. It catalyses the reaction guanosine(37) in tRNA + S-adenosyl-L-methionine = N(1)-methylguanosine(37) in tRNA + S-adenosyl-L-homocysteine + H(+). Functionally, specifically methylates guanosine-37 in various tRNAs. This is tRNA (guanine-N(1)-)-methyltransferase from Dictyoglomus turgidum (strain DSM 6724 / Z-1310).